A 262-amino-acid chain; its full sequence is Polyamine aminopropyltransferase (262 aa).

In terms of domain architecture, PABS spans 1–249 (MWITQEITPY…DIHRAAFALP (249 aa)). S-methyl-5'-thioadenosine is bound at residue asparagine 29. Aspartate 83 contributes to the spermidine binding site. The active-site Proton acceptor is the aspartate 155.

Homodimer.

It localises to the cytoplasm. The enzyme catalyses S-adenosyl 3-(methylsulfanyl)propylamine + putrescine = S-methyl-5'-thioadenosine + spermidine + H(+). It functions in the pathway amine and polyamine biosynthesis; spermidine biosynthesis; spermidine from putrescine: step 1/1. With respect to regulation, inhibited by methylglyoxal bis(cyclopentylamidinohydrazone)(MGBCP). In terms of biological role, involved in the cell growth and proliferation. Catalyzes the irreversible transfer of a propylamine group from the amino donor S-adenosylmethioninamine (decarboxy-AdoMet) to putrescine (1,4-diaminobutane) to yield spermidine. Spermidine cannot be used as an aminopropyl acceptor. The protein is Polyamine aminopropyltransferase of Helicobacter pylori (strain ATCC 700392 / 26695) (Campylobacter pylori).